The sequence spans 442 residues: MTQSGQAESETPSTLIHCVRDRQQAKRELERLANRSTGNSQKQAMATVEDILDTVRSQGDQALITLTERFDGFRPEPLTVAPEELEDAWRKTPQKLQSALELAYRRIQDFHQHQRPNDLMVQGIHGEQLGRRWRPVQKAGIYIPGGRAAYPSTVLMNAVPAQVAGVEQLVMTSPAGRDGQINRTVLAAAHLAGIREVLRLGGAQAIAALAFGTETVPKVDVISGPGNLYVTLAKKAVYGQVGIDSLAGPSEVLVIADQSARVEQVAADLLAQSEHDPLAAAVLLTTEASLAEQLPSHLEAQLKGHPREQICRASLSNWGLVVICESLERCAQLSDHFAPEHLELLVEHPHAIADCIKNAGAIFIGPWTPEAVGDYLAGPNHTLPTCGTARFSGALSVETFLRHTSLIEFNRSALEATANAVRELASSEGLHSHAESVRIRFE.

Residues tyrosine 142, glutamine 204, and asparagine 227 each contribute to the NAD(+) site. Substrate contacts are provided by serine 250, glutamine 272, and histidine 275. Glutamine 272 and histidine 275 together coordinate Zn(2+). Residues glutamate 340 and histidine 341 each act as proton acceptor in the active site. Substrate is bound by residues histidine 341, aspartate 374, glutamate 428, and histidine 433. Aspartate 374 serves as a coordination point for Zn(2+). Residue histidine 433 coordinates Zn(2+).

Belongs to the histidinol dehydrogenase family. It depends on Zn(2+) as a cofactor.

The catalysed reaction is L-histidinol + 2 NAD(+) + H2O = L-histidine + 2 NADH + 3 H(+). It functions in the pathway amino-acid biosynthesis; L-histidine biosynthesis; L-histidine from 5-phospho-alpha-D-ribose 1-diphosphate: step 9/9. Its function is as follows. Catalyzes the sequential NAD-dependent oxidations of L-histidinol to L-histidinaldehyde and then to L-histidine. The polypeptide is Histidinol dehydrogenase (Prochlorococcus marinus (strain MIT 9313)).